Here is a 251-residue protein sequence, read N- to C-terminus: N-acetylmuramoyl-L-alanine amidase CwlA (251 aa).

Residues 1 to 37 form the signal peptide; sequence MEIKQMLVPVSRYSVLCPYEMNPTEITFHNTYNDAPA. The region spanning 38 to 140 is the N-acetylmuramoyl-L-alanine amidase domain; the sequence is INERNNVANN…QERNGKYCPH (103 aa).

Belongs to the N-acetylmuramoyl-L-alanine amidase 2 family.

Its subcellular location is the secreted. It carries out the reaction Hydrolyzes the link between N-acetylmuramoyl residues and L-amino acid residues in certain cell-wall glycopeptides.. In terms of biological role, autolysins are involved in some important biological processes such as cell separation, cell-wall turnover, competence for genetic transformation, formation of the flagella and sporulation. In Bacillus sp, this protein is N-acetylmuramoyl-L-alanine amidase CwlA (cwlA).